Reading from the N-terminus, the 499-residue chain is MPSIVRNHGPHNKILLSALLLALFGWVPLASAAVAVPMDSTGPYRTVSHPENAPSGVDAGVGPSEWTHAYANPAHNAAFPVPDDAPEWIRNGVSWLFPEARAWPLANPPFGSKTYGAAEASVTQTQFYGNALGPSVVDGVVYAESDDMFAYAVNAKTGKLIWRASPVGNNLMGNPLVIGNTVYLSAGSVAFNFANVLRYAHNPSASARGLNVSFNGIYALNRSNGKLLWYFATPGETMATPAYDNNTLFIADGAGNAFGINATTGKQVWKTHVGGMDNMSSVTAYRHNIYFAMAIKPYLYCLNESNGHIVWKGTIPGASNTGIGDVSPAAADGVVVLDATTKPQANKKAMFSNVIRAFDAKTGAVLWTRNMGSGGKIPAFKGGVPMIHNNIVYVGNPVASTYQAYELKTGKLLWTWHVPTKVAAGAGRSAPTYYKGLLYITTGQYIFVVNPATGKELHQHHIGGQFGIESPVIVGGTVYLTNSWDWIMAIPLKTISHGS.

The N-terminal stretch at 1–32 is a signal peptide; that stretch reads MPSIVRNHGPHNKILLSALLLALFGWVPLASA.

This sequence belongs to the tetrathionate hydrolase family. In terms of assembly, homodimer.

The protein resides in the cell membrane. It carries out the reaction tetrathionate + H2O = sulfur + thiosulfate + sulfate + H(+). Catalyzes the hydrolysis of tetrathionate to generate elemental sulfur, thiosulfate and sulfate. The polypeptide is Tetrathionate hydrolase (Acidithiobacillus ferrooxidans (strain ATCC 23270 / DSM 14882 / CIP 104768 / NCIMB 8455) (Ferrobacillus ferrooxidans (strain ATCC 23270))).